The following is a 544-amino-acid chain: Chaperonin GroEL 2 (544 aa).

Residues Thr-29–Pro-32, Asp-86–Thr-90, Gly-413, Asn-479–Ala-481, and Asp-495 each bind ATP.

It belongs to the chaperonin (HSP60) family. As to quaternary structure, forms a cylinder of 14 subunits composed of two heptameric rings stacked back-to-back. Interacts with the co-chaperonin GroES.

The protein resides in the cytoplasm. The catalysed reaction is ATP + H2O + a folded polypeptide = ADP + phosphate + an unfolded polypeptide.. Functionally, together with its co-chaperonin GroES, plays an essential role in assisting protein folding. The GroEL-GroES system forms a nano-cage that allows encapsulation of the non-native substrate proteins and provides a physical environment optimized to promote and accelerate protein folding. This is Chaperonin GroEL 2 from Trichodesmium erythraeum (strain IMS101).